The following is a 157-amino-acid chain: Cytochrome c-type biogenesis protein CcmE (157 aa).

The Cytoplasmic portion of the chain corresponds to 1–8 (MHPVRKQR). A helical; Signal-anchor for type II membrane protein transmembrane segment spans residues 9–29 (LMTVLFIVIASSVAVGLMVFA). The Periplasmic portion of the chain corresponds to 30 to 157 (LSKNLNLFYP…KTCEGLDYAS (128 aa)). The heme site is built by His-124 and Tyr-128.

The protein belongs to the CcmE/CycJ family.

Its subcellular location is the cell inner membrane. Heme chaperone required for the biogenesis of c-type cytochromes. Transiently binds heme delivered by CcmC and transfers the heme to apo-cytochromes in a process facilitated by CcmF and CcmH. The chain is Cytochrome c-type biogenesis protein CcmE from Saccharophagus degradans (strain 2-40 / ATCC 43961 / DSM 17024).